The chain runs to 504 residues: Glycerol kinase (504 aa).

An ADP-binding site is contributed by threonine 13. Residues threonine 13, threonine 14, and serine 15 each contribute to the ATP site. Threonine 13 serves as a coordination point for sn-glycerol 3-phosphate. Residue arginine 17 participates in ADP binding. Sn-glycerol 3-phosphate-binding residues include arginine 83, glutamate 84, and tyrosine 135. Residues arginine 83, glutamate 84, and tyrosine 135 each coordinate glycerol. Histidine 231 is modified (phosphohistidine; by HPr). Aspartate 245 is a binding site for sn-glycerol 3-phosphate. Residues aspartate 245 and glutamine 246 each contribute to the glycerol site. Residues threonine 267 and glycine 310 each contribute to the ADP site. The ATP site is built by threonine 267, glycine 310, glutamine 314, and glycine 411. Residues glycine 411 and asparagine 415 each coordinate ADP.

This sequence belongs to the FGGY kinase family. As to quaternary structure, homotetramer and homodimer (in equilibrium). Post-translationally, the phosphoenolpyruvate-dependent sugar phosphotransferase system (PTS), including enzyme I, and histidine-containing protein (HPr) are required for the phosphorylation, which leads to the activation of the enzyme.

The catalysed reaction is glycerol + ATP = sn-glycerol 3-phosphate + ADP + H(+). Its pathway is polyol metabolism; glycerol degradation via glycerol kinase pathway; sn-glycerol 3-phosphate from glycerol: step 1/1. Activated by phosphorylation and inhibited by fructose 1,6-bisphosphate (FBP). Key enzyme in the regulation of glycerol uptake and metabolism. Catalyzes the phosphorylation of glycerol to yield sn-glycerol 3-phosphate. This chain is Glycerol kinase, found in Pediococcus pentosaceus (strain ATCC 25745 / CCUG 21536 / LMG 10740 / 183-1w).